The chain runs to 47 residues: UPF0391 membrane protein rrnAC2507 (47 aa).

The next 2 helical transmembrane spans lie at 5-25 and 27-47; these read VVLVILAVVAGIAGFRGIAGL and FRVAKFLIVIFLVLALVTFLL.

Belongs to the UPF0391 family.

It localises to the cell membrane. The chain is UPF0391 membrane protein rrnAC2507 from Haloarcula marismortui (strain ATCC 43049 / DSM 3752 / JCM 8966 / VKM B-1809) (Halobacterium marismortui).